Reading from the N-terminus, the 113-residue chain is Mitochondrial import inner membrane translocase subunit TIM14 (113 aa).

Residues 1 to 4 (MATP) are Mitochondrial intermembrane-facing. Residues 5-22 (IIVGATIAGIAYSSRFLI) form a helical membrane-spanning segment. The Mitochondrial matrix segment spans residues 23–113 (RVIQRAKSKQ…RNVLSSKNSN (91 aa)). A J domain is found at 59 to 113 (EAANILGLKEESTKEEIKIRHKLLMIKNHPDKGGSSYLATKINEARNVLSSKNSN).

Belongs to the TIM14 family. Interacts with PHB2; the interaction associates DNAJC19 with the prohibitin complex. Interacts with TIMM16/PAM16. May be a component of the PAM complex at least composed of a mitochondrial HSP70 protein, GRPEL1 or GRPEL2, TIMM44, TIMM16/PAM16 and TIMM14/DNAJC19.

It localises to the mitochondrion inner membrane. Its function is as follows. Mitochondrial co-chaperone which forms a complex with prohibitins to regulate cardiolipin remodeling. May be a component of the PAM complex, a complex required for the translocation of transit peptide-containing proteins from the inner membrane into the mitochondrial matrix in an ATP-dependent manner. May act as a co-chaperone that stimulate the ATP-dependent activity. The protein is Mitochondrial import inner membrane translocase subunit TIM14 (dnajc19) of Dictyostelium discoideum (Social amoeba).